A 139-amino-acid polypeptide reads, in one-letter code: Non-structural protein 1 (139 aa).

The short motif at 136 to 139 is the DLNP; interaction with MAP1B element; that stretch reads DLNP.

The protein belongs to the pneumovirus non-structural protein 1 family. As to quaternary structure, monomer. Homomultimer. Heteromultimer with NS2. Interacts with the matrix protein M. Interacts with host ELOC and CUL2; this interaction allows NS1 to form an active E3 ligase with ELOC and CUL2. Interacts with host IRF3; this interaction leads to the disrupted association of IRF3 with CREBBP and thus reduced binding of IRF3 to the IFN-beta promoter. Interacts with host MAVS; this interaction prevents MAVS binding to RIGI and inhibits signaling pathway leading to interferon production. Interacts with host MAP1B/microtubule-associated protein 1B. Interacts with host TRIM25 (via SPRY domain); this interaction suppresses RIGI ubiquitination and results in decreased interaction between RIGI and MAVS.

The protein resides in the host cytoplasm. The protein localises to the host mitochondrion. Its subcellular location is the host nucleus. Plays a major role in antagonizing the type I IFN-mediated antiviral response by degrading or inhibiting multiple cellular factors required for either IFN induction or response pathways. Acts cooperatively with NS2 to repress activation and nuclear translocation of host IFN-regulatory factor IRF3. Also disrupts the association of IRF3 with CREBBP. Interacts with host mitochondrial-associated membrane (MAM) MAVS and prevents the interaction with RIGI. Interacts with TRIM25 to suppress TRIM25-mediated RIGI ubiquitination and thereby RIGI-MAVS interaction. Together with NS2, participates in the proteasomal degradation of host STAT2, IRF3, IRF7, TBK1 and RIGI through a NS-degradasome involving CUL2 and Elongin-C. The degradasome requires an intact mitochondrial MAVS. Decreases the levels of host TRAF3 and IKBKE/IKK-epsilon. As functions other than disruptions of the type I IFN-mediated antiviral signaling pathways, induces host SOCS1 and SOCS3 expression. Suppresses premature apoptosis by an NF-kappa-B-dependent, interferon-independent mechanism and thus facilitates virus growth. Additionally, NS1 may serve some inhibitory role in viral transcription and RNA replication. Suppresses proliferation and activation of host CD103+ CD8+ cytotoxic T-lymphocytes and Th17 helper T-lymphocytes. The protein is Non-structural protein 1 (1C) of Homo sapiens (Human).